A 192-amino-acid chain; its full sequence is ATP-dependent Clp protease proteolytic subunit 1 (192 aa).

Residue S92 is the Nucleophile of the active site. Residue H117 is part of the active site.

Belongs to the peptidase S14 family. Fourteen ClpP subunits assemble into 2 heptameric rings which stack back to back to give a disk-like structure with a central cavity, resembling the structure of eukaryotic proteasomes.

It is found in the cytoplasm. The enzyme catalyses Hydrolysis of proteins to small peptides in the presence of ATP and magnesium. alpha-casein is the usual test substrate. In the absence of ATP, only oligopeptides shorter than five residues are hydrolyzed (such as succinyl-Leu-Tyr-|-NHMec, and Leu-Tyr-Leu-|-Tyr-Trp, in which cleavage of the -Tyr-|-Leu- and -Tyr-|-Trp bonds also occurs).. Cleaves peptides in various proteins in a process that requires ATP hydrolysis. Has a chymotrypsin-like activity. Plays a major role in the degradation of misfolded proteins. This Chlamydia muridarum (strain MoPn / Nigg) protein is ATP-dependent Clp protease proteolytic subunit 1.